The following is a 99-amino-acid chain: NADH-ubiquinone oxidoreductase chain 4L (99 aa).

A run of 3 helical transmembrane segments spans residues 5-25, 30-50, and 65-85; these read IITA…GFII, ILLL…IIIC, and LYIL…LVLF.

This sequence belongs to the complex I subunit 4L family.

It is found in the mitochondrion membrane. The catalysed reaction is a ubiquinone + NADH + 5 H(+)(in) = a ubiquinol + NAD(+) + 4 H(+)(out). Functionally, core subunit of the mitochondrial membrane respiratory chain NADH dehydrogenase (Complex I) that is believed to belong to the minimal assembly required for catalysis. Complex I functions in the transfer of electrons from NADH to the respiratory chain. The immediate electron acceptor for the enzyme is believed to be ubiquinone. The polypeptide is NADH-ubiquinone oxidoreductase chain 4L (ND4L) (Allomyces macrogynus).